Consider the following 363-residue polypeptide: Pyrimidine monooxygenase RutA (363 aa).

FMN contacts are provided by residues 49-50 (IK), asparagine 115, glutamate 124, 140-141 (RY), and serine 190.

It belongs to the NtaA/SnaA/DszA monooxygenase family. RutA subfamily.

The catalysed reaction is uracil + FMNH2 + NADH + O2 = (Z)-3-ureidoacrylate + FMN + NAD(+) + H2O + H(+). The enzyme catalyses thymine + FMNH2 + NADH + O2 = (Z)-2-methylureidoacrylate + FMN + NAD(+) + H2O + H(+). Catalyzes the pyrimidine ring opening between N-3 and C-4 by an unusual flavin hydroperoxide-catalyzed mechanism, adding oxygen atoms in the process to yield ureidoacrylate peracid, that immediately reacts with FMN forming ureidoacrylate and FMN-N(5)-oxide. The FMN-N(5)-oxide reacts spontaneously with NADH to produce FMN. Requires the flavin reductase RutF to regenerate FMN in vivo. The protein is Pyrimidine monooxygenase RutA of Klebsiella pneumoniae (strain 342).